Reading from the N-terminus, the 215-residue chain is Probable phosphoglycerate mutase GpmB (215 aa).

Substrate is bound by residues 8-15 (RHGETQWN), 21-22 (QG), Arg58, 82-85 (ELDM), 104-105 (RR), and 151-152 (GI). His9 functions as the Tele-phosphohistidine intermediate in the catalytic mechanism. Glu82 functions as the Proton donor/acceptor in the catalytic mechanism.

The protein belongs to the phosphoglycerate mutase family. GpmB subfamily.

It carries out the reaction (2R)-2-phosphoglycerate = (2R)-3-phosphoglycerate. The protein operates within carbohydrate degradation; glycolysis; pyruvate from D-glyceraldehyde 3-phosphate: step 3/5. In Enterobacter sp. (strain 638), this protein is Probable phosphoglycerate mutase GpmB.